Consider the following 713-residue polypeptide: Cadherin-13 (713 aa).

The first 22 residues, 1–22 (MQPATPLVLCVLLSQVLLLTSA), serve as a signal peptide directing secretion. The propeptide occupies 23–138 (EDLDCTPGFQ…RTSPVPRQKR (116 aa)). Residues Asn52 and Asn86 are each glycosylated (N-linked (GlcNAc...) asparagine). Cadherin domains lie at 139–245 (SIVV…RPIF), 246–363 (REGP…SPKF), 364–477 (TKKE…SPVF), 478–585 (YPDP…APFI), and 584–694 (FIYP…AAGA). Residues 156–178 (PRDVGKVVDSDRPEGSKFRLTGK) are disordered. Over residues 158 to 172 (DVGKVVDSDRPEGSK) the composition is skewed to basic and acidic residues. Asn382, Asn489, Asn500, Asn530, Asn598, Asn638, and Asn671 each carry an N-linked (GlcNAc...) asparagine glycan. Gly693 carries the GPI-anchor amidated glycine lipid modification. Positions 694-713 (APHFSAATALLLSLFSLARL) are cleaved as a propeptide — removed in mature form.

By contrast to classical cadherins, homodimerization in trans is not mediated by cadherin EC1 domain strand-swapping, but instead through a homophilic adhesive interface which joins two elongated EC1-EC2 domains through a region near their Ca2+-binding sites to form a tetrahedral, X-like shape.

It is found in the cell membrane. Its subcellular location is the cytoplasm. Cadherins are calcium-dependent cell adhesion proteins. They preferentially interact with themselves in a homophilic manner in connecting cells; cadherins may thus contribute to the sorting of heterogeneous cell types. May act as a negative regulator of neural cell growth. The polypeptide is Cadherin-13 (CDH13) (Bos taurus (Bovine)).